Consider the following 212-residue polypeptide: Protein-L-isoaspartate O-methyltransferase (212 aa).

Ser61 is an active-site residue.

Belongs to the methyltransferase superfamily. L-isoaspartyl/D-aspartyl protein methyltransferase family.

It localises to the cytoplasm. It carries out the reaction [protein]-L-isoaspartate + S-adenosyl-L-methionine = [protein]-L-isoaspartate alpha-methyl ester + S-adenosyl-L-homocysteine. Its function is as follows. Catalyzes the methyl esterification of L-isoaspartyl residues in peptides and proteins that result from spontaneous decomposition of normal L-aspartyl and L-asparaginyl residues. It plays a role in the repair and/or degradation of damaged proteins. The protein is Protein-L-isoaspartate O-methyltransferase of Pseudoalteromonas atlantica (strain T6c / ATCC BAA-1087).